Here is a 237-residue protein sequence, read N- to C-terminus: DNA repair protein RecO (237 aa).

It belongs to the RecO family.

Its function is as follows. Involved in DNA repair and RecF pathway recombination. The polypeptide is DNA repair protein RecO (Rickettsia akari (strain Hartford)).